The sequence spans 396 residues: Na(+)/H(+) antiporter NhaA 1 (396 aa).

11 helical membrane passes run 15 to 35 (AGIF…VGFL), 60 to 80 (LEFW…GLEL), 96 to 116 (FLPS…FAVI), 126 to 146 (GWAI…ALLG), 155 to 175 (IFVL…IALF), 179 to 199 (ALNF…LVMC), 207 to 227 (IPFV…GIHA), 255 to 275 (SLGY…NAGV), 290 to 312 (PLGV…SWFL), 329 to 349 (LYAV…VDNL), and 363 to 383 (LAIL…AKAV).

It belongs to the NhaA Na(+)/H(+) (TC 2.A.33) antiporter family.

Its subcellular location is the cell inner membrane. The catalysed reaction is Na(+)(in) + 2 H(+)(out) = Na(+)(out) + 2 H(+)(in). Its function is as follows. Na(+)/H(+) antiporter that extrudes sodium in exchange for external protons. In Campylobacter hominis (strain ATCC BAA-381 / DSM 21671 / CCUG 45161 / LMG 19568 / NCTC 13146 / CH001A), this protein is Na(+)/H(+) antiporter NhaA 1.